The following is a 267-amino-acid chain: MPQVTMRQMLEAGVHFGHQTRYWNPKMAPYIFGARGKIHIINLEKTVPLFNDAMNFISSVAQKRGTVLFLGTKRSARETIKEEAERCGMPFMNQRWLGGTLTNFRTVKQSVARLKELEAGETDGTFEKLVKHEVLGLRRERDKLEASLGGIKDMNRLPDAIFVIDIGHEDIAIKEAKKLGIPVIAVVDTNYNPELVDYAIPGNDDAIRAVQLYSRAAADAVLEGKAAAPHAATVREEEFADAPAEDAKPARRAPAKKAAADKGEAQA.

A disordered region spans residues 232 to 267 (ATVREEEFADAPAEDAKPARRAPAKKAAADKGEAQA). The segment covering 258 to 267 (AAADKGEAQA) has biased composition (basic and acidic residues).

It belongs to the universal ribosomal protein uS2 family.

This is Small ribosomal subunit protein uS2 from Stenotrophomonas maltophilia (strain R551-3).